The primary structure comprises 74 residues: Kappa-scoloptoxin(07)-Ssm2f (74 aa).

Positions 1 to 19 (MLVFYAILFVTVFSNTVMG) are cleaved as a signal peptide. A propeptide spanning residues 20-41 (ATIDKPIPKPIFREAIEEMEVN) is cleaved from the precursor.

It belongs to the scoloptoxin-07 family. Post-translationally, contains 3 disulfide bonds. In terms of tissue distribution, expressed by the venom gland.

It localises to the secreted. Functionally, inhibits voltage-gated potassium channels. The polypeptide is Kappa-scoloptoxin(07)-Ssm2f (Scolopendra mutilans (Chinese red-headed centipede)).